The chain runs to 86 residues: Large ribosomal subunit protein bL31B (86 aa).

Belongs to the bacterial ribosomal protein bL31 family. Type B subfamily. In terms of assembly, part of the 50S ribosomal subunit.

This is Large ribosomal subunit protein bL31B from Salmonella arizonae (strain ATCC BAA-731 / CDC346-86 / RSK2980).